The sequence spans 188 residues: Apolipophorin-3 (188 aa).

Positions 1–17 are cleaved as a signal peptide; the sequence is MVAKLFVLVACIALSHA. Positions 18 to 22 are excised as a propeptide; the sequence is AMVRR.

This sequence belongs to the insect apolipophorin-3 family. Equilibrium between a soluble monomer and a bound lipoprotein form. Apolipophorin-3 associates with lipophorin during lipid loading until each particle contains 9 or 14 molecules of apolipophorin-3. As to expression, expressed in fat body and secreted in hemolymph. Also expressed in ovary and testis at lower levels.

Its subcellular location is the secreted. Its function is as follows. Assists in the loading of diacylglycerol, generated from triacylglycerol stores in the fat body through the action of adipokinetic hormone, into lipophorin, the hemolymph lipoprotein. It increases the lipid carrying capacity of lipophorin by covering the expanding hydrophobic surface resulting from diacylglycerol uptake. It thus plays a critical role in the transport of lipids during flight in several species of insects. In Spodoptera litura (Asian cotton leafworm), this protein is Apolipophorin-3.